A 79-amino-acid chain; its full sequence is Small ribosomal subunit protein bS18 (79 aa).

The protein belongs to the bacterial ribosomal protein bS18 family. As to quaternary structure, part of the 30S ribosomal subunit. Forms a tight heterodimer with protein bS6.

Binds as a heterodimer with protein bS6 to the central domain of the 16S rRNA, where it helps stabilize the platform of the 30S subunit. In Rhodopseudomonas palustris (strain BisB5), this protein is Small ribosomal subunit protein bS18.